The sequence spans 698 residues: Probable xyloglucan glycosyltransferase 2 (698 aa).

2 helical membrane-spanning segments follow: residues 124–144 and 190–210; these read GFLALSLLALAVELAAYWNGW and ILLFVIQSMDRLVLCLGCFWI. Aspartate 272 is a catalytic residue. 2 residues coordinate substrate: aspartate 331 and aspartate 333. Aspartate 425 is an active-site residue. Transmembrane regions (helical) follow at residues 503 to 523, 528 to 548, 653 to 668, and 673 to 693; these read LILPFYSFTLFCVILPLTMFV, LPVWVICYVPVCMSFLNILPS, LALSLLLLTAATRSLL, and IHFYFLLFQGVSFLFVGLDLI.

The protein belongs to the glycosyltransferase 2 family. Plant cellulose synthase-like C subfamily.

Its subcellular location is the golgi apparatus membrane. In terms of biological role, probable beta-1,4-glucan synthase rather involved in the synthesis of the xyloglucan backbone than cellulose. Seems to work simultaneously with xyloglucan 6-xylosyltransferase. Xyloglucan is a noncellulosic polysaccharides of plant cell wall and consists of a glucan backbone substituted by xylose, galactose and fucose. The protein is Probable xyloglucan glycosyltransferase 2 (CSLC2) of Oryza sativa subsp. indica (Rice).